Consider the following 301-residue polypeptide: Hydroxymycolate synthase MmaA4 (301 aa).

S-adenosyl-L-methionine is bound by residues 42–43 (YS), 81–83 (GCG), 103–108 (TLSKNQ), 132–133 (WE), and isoleucine 145. Residue cysteine 278 is part of the active site.

Belongs to the CFA/CMAS family. As to quaternary structure, monomer.

It participates in lipid metabolism; mycolic acid biosynthesis. Inhibited by S-adenosyl-N-decyl-aminoethyl (SADAE). Functionally, involved in the biosynthesis of hydroxymycolate, a common precursor of oxygenated mycolic acids (methoxy-mycolate and keto-mycolate). Probably transfers a methyl group from the S-adenosylmethionine (SAM) cofactor and, subsequently or simultaneously, a water molecule onto the double bound of ethylene substrates, leading to the formation of the hydroxylated product at the distal position. Involved in the activation of the antitubercular drug thiacetazone (TAC). In Mycobacterium tuberculosis (strain ATCC 25618 / H37Rv), this protein is Hydroxymycolate synthase MmaA4 (mmaA4).